The following is a 526-amino-acid chain: Glucomannan 4-beta-mannosyltransferase 1 (526 aa).

A helical transmembrane segment spans residues 31-51 (VIIPLLKLAVIVCSVMSIMLF). Asp130 is a catalytic residue. Substrate-binding residues include Asp189 and Asp191. Asp283 is an active-site residue. 4 helical membrane passes run 362–382 (IVAH…CVIV), 399–419 (ITIL…LWIL), 477–497 (PLEI…LLFG), and 501–521 (FFVY…GLVG).

This sequence belongs to the glycosyltransferase 2 family. Plant cellulose synthase-like A subfamily.

It localises to the golgi apparatus membrane. The enzyme catalyses GDP-mannose + (glucomannan)n = GDP + (glucomannan)n+1.. Its function is as follows. Possesses 4-beta-mannosyltransferase activity on mannan using GDP-mannose. The beta-1,4-mannan product is the backbone for galactomannan synthesis by galactomannan galactosyltransferase. The galactomannan is a hemicellulosic storage polysaccharide accumulated in the form of secondary wall thickenings in the seed endosperm. The sequence is that of Glucomannan 4-beta-mannosyltransferase 1 from Cyamopsis tetragonoloba (Guar).